The chain runs to 200 residues: MESHNTLNLDMEKDQEKAFDYSKRAQWLRAAVLGANDGLVSTASLMMGVGAVKQNVKIMILTGFAGLVAGACSMAIGEFVSVYSQYDIEVAQMKRETGGEIEKEKLPSPTQAAAASALAFSLGAMVPLLAAAFVKEYKVRIGAIVAAVTLALVMFGWLGAVLGKAPVVKSSLRVLVGGWLAMAITYGFTKLIGSHSHMYV.

The Cytoplasmic segment spans residues 1–31 (MESHNTLNLDMEKDQEKAFDYSKRAQWLRAA). Residues 32 to 52 (VLGANDGLVSTASLMMGVGAV) traverse the membrane as a helical segment. Over 53-59 (KQNVKIM) the chain is Vacuolar. A helical membrane pass occupies residues 60–80 (ILTGFAGLVAGACSMAIGEFV). Topologically, residues 81–113 (SVYSQYDIEVAQMKRETGGEIEKEKLPSPTQAA) are cytoplasmic. A helical transmembrane segment spans residues 114–134 (AASALAFSLGAMVPLLAAAFV). Topologically, residues 135–140 (KEYKVR) are vacuolar. Residues 141–161 (IGAIVAAVTLALVMFGWLGAV) traverse the membrane as a helical segment. Topologically, residues 162–173 (LGKAPVVKSSLR) are cytoplasmic. Residues 174-194 (VLVGGWLAMAITYGFTKLIGS) form a helical membrane-spanning segment. Residues 195 to 200 (HSHMYV) lie on the Vacuolar side of the membrane.

The protein belongs to the CCC1 family.

It is found in the vacuole membrane. It carries out the reaction Fe(2+)(in) = Fe(2+)(out). In terms of biological role, probable vacuolar iron transporter that may be involved in the regulation of iron distribution throughout the plant. The protein is Vacuolar iron transporter homolog 3 of Arabidopsis thaliana (Mouse-ear cress).